We begin with the raw amino-acid sequence, 146 residues long: D-aminoacyl-tRNA deacylase (146 aa).

The short motif at 138 to 139 (GP) is the Gly-cisPro motif, important for rejection of L-amino acids element.

The protein belongs to the DTD family. In terms of assembly, homodimer.

It localises to the cytoplasm. It carries out the reaction glycyl-tRNA(Ala) + H2O = tRNA(Ala) + glycine + H(+). The catalysed reaction is a D-aminoacyl-tRNA + H2O = a tRNA + a D-alpha-amino acid + H(+). An aminoacyl-tRNA editing enzyme that deacylates mischarged D-aminoacyl-tRNAs. Also deacylates mischarged glycyl-tRNA(Ala), protecting cells against glycine mischarging by AlaRS. Acts via tRNA-based rather than protein-based catalysis; rejects L-amino acids rather than detecting D-amino acids in the active site. By recycling D-aminoacyl-tRNA to D-amino acids and free tRNA molecules, this enzyme counteracts the toxicity associated with the formation of D-aminoacyl-tRNA entities in vivo and helps enforce protein L-homochirality. The protein is D-aminoacyl-tRNA deacylase of Xanthomonas campestris pv. campestris (strain 8004).